The primary structure comprises 565 residues: Adenine deaminase (565 aa).

The protein belongs to the metallo-dependent hydrolases superfamily. Adenine deaminase family. It depends on Mn(2+) as a cofactor.

The catalysed reaction is adenine + H2O + H(+) = hypoxanthine + NH4(+). The chain is Adenine deaminase from Cereibacter sphaeroides (strain ATCC 17025 / ATH 2.4.3) (Rhodobacter sphaeroides).